The chain runs to 68 residues: Pleurocidin (68 aa).

Positions 1–22 (MKFTATFLMIAIFVLMVEPGEC) are cleaved as a signal peptide. The propeptide occupies 48–68 (GDKQELNKRAVDEDPNVIVFE).

This sequence belongs to the pleurocidin family. As to expression, goblet cells.

Its subcellular location is the secreted. Its function is as follows. Antimicrobial peptide with potent activity against Gram-positive and Gram-negative bacteria. Activity against E.coli and B.subtilis. Weaker activity against L.mucor, s.marcescens and P.aeruginosa. May play a role in innate host defense. The polypeptide is Pleurocidin (ple2) (Pseudopleuronectes americanus (Winter flounder)).